A 154-amino-acid chain; its full sequence is Crossover junction endodeoxyribonuclease RuvC (154 aa).

Residues Asp7, Glu67, and Asp139 contribute to the active site. Mg(2+) is bound by residues Asp7, Glu67, and Asp139.

The protein belongs to the RuvC family. As to quaternary structure, homodimer which binds Holliday junction (HJ) DNA. The HJ becomes 2-fold symmetrical on binding to RuvC with unstacked arms; it has a different conformation from HJ DNA in complex with RuvA. In the full resolvosome a probable DNA-RuvA(4)-RuvB(12)-RuvC(2) complex forms which resolves the HJ. Mg(2+) is required as a cofactor.

It is found in the cytoplasm. It catalyses the reaction Endonucleolytic cleavage at a junction such as a reciprocal single-stranded crossover between two homologous DNA duplexes (Holliday junction).. The RuvA-RuvB-RuvC complex processes Holliday junction (HJ) DNA during genetic recombination and DNA repair. Endonuclease that resolves HJ intermediates. Cleaves cruciform DNA by making single-stranded nicks across the HJ at symmetrical positions within the homologous arms, yielding a 5'-phosphate and a 3'-hydroxyl group; requires a central core of homology in the junction. The consensus cleavage sequence is 5'-(A/T)TT(C/G)-3'. Cleavage occurs on the 3'-side of the TT dinucleotide at the point of strand exchange. HJ branch migration catalyzed by RuvA-RuvB allows RuvC to scan DNA until it finds its consensus sequence, where it cleaves and resolves the cruciform DNA. This Prochlorococcus marinus (strain NATL2A) protein is Crossover junction endodeoxyribonuclease RuvC.